The sequence spans 283 residues: 4-diphosphocytidyl-2-C-methyl-D-erythritol kinase (283 aa).

Lys-10 is a catalytic residue. 95–105 (PVAAGLGGGSS) contributes to the ATP binding site. The active site involves Asp-137.

It belongs to the GHMP kinase family. IspE subfamily.

The enzyme catalyses 4-CDP-2-C-methyl-D-erythritol + ATP = 4-CDP-2-C-methyl-D-erythritol 2-phosphate + ADP + H(+). It functions in the pathway isoprenoid biosynthesis; isopentenyl diphosphate biosynthesis via DXP pathway; isopentenyl diphosphate from 1-deoxy-D-xylulose 5-phosphate: step 3/6. In terms of biological role, catalyzes the phosphorylation of the position 2 hydroxy group of 4-diphosphocytidyl-2C-methyl-D-erythritol. This Pediococcus pentosaceus (strain ATCC 25745 / CCUG 21536 / LMG 10740 / 183-1w) protein is 4-diphosphocytidyl-2-C-methyl-D-erythritol kinase.